Reading from the N-terminus, the 242-residue chain is Ribonuclease HII (242 aa).

The RNase H type-2 domain maps to 21-234 (KIIVGLDEAG…SKNLLKEIEE (214 aa)). D27, E28, and D128 together coordinate a divalent metal cation.

The protein belongs to the RNase HII family. It depends on Mn(2+) as a cofactor. Requires Mg(2+) as cofactor.

It is found in the cytoplasm. It catalyses the reaction Endonucleolytic cleavage to 5'-phosphomonoester.. In terms of biological role, endonuclease that specifically degrades the RNA of RNA-DNA hybrids. The protein is Ribonuclease HII of Methanococcus maripaludis (strain DSM 14266 / JCM 13030 / NBRC 101832 / S2 / LL).